The following is a 131-amino-acid chain: ATP synthase epsilon chain, chloroplastic (131 aa).

This sequence belongs to the ATPase epsilon chain family. As to quaternary structure, F-type ATPases have 2 components, CF(1) - the catalytic core - and CF(0) - the membrane proton channel. CF(1) has five subunits: alpha(3), beta(3), gamma(1), delta(1), epsilon(1). CF(0) has three main subunits: a, b and c.

It is found in the plastid. The protein localises to the chloroplast thylakoid membrane. Its function is as follows. Produces ATP from ADP in the presence of a proton gradient across the membrane. This chain is ATP synthase epsilon chain, chloroplastic, found in Guillardia theta (Cryptophyte).